The chain runs to 694 residues: Nuclear factor erythroid 2-related factor 3 (694 aa).

Over residues 133 to 150 the composition is skewed to low complexity; the sequence is ASSTGGAGASVDGGSQAV. 2 disordered regions span residues 133–256 and 330–357; these read ASST…LNGT and DPTARTSQSQEPFLQLNSHTTNPEQTLP. Composition is skewed to basic and acidic residues over residues 193 to 217 and 231 to 254; these read GVLREKHEAVDHSSQHEENEERVSA and NKIAEKPDWEAEKTTESRNERHLN. A compositionally biased stretch (polar residues) spans 333–357; that stretch reads ARTSQSQEPFLQLNSHTTNPEQTLP. Residues 578-641 form the bZIP domain; sequence LIRDIRRRGK…NIMKQKLHDL (64 aa). A basic motif region spans residues 580–599; sequence RDIRRRGKNKVAAQNCRKRK. The leucine-zipper stretch occupies residues 606 to 620; it reads LEDDVCNLQAKKETL.

This sequence belongs to the bZIP family. CNC subfamily. In terms of assembly, heterodimer with MAFG, MAFK and other small MAF proteins that binds to the MAF recognition elements (MARE). In terms of tissue distribution, highly expressed in human placenta and also in B-cell and monocyte cell lines. Low expression in heart, brain, lung, skeletal muscle, kidney and pancreas.

Its subcellular location is the nucleus. Functionally, activates erythroid-specific, globin gene expression. In Homo sapiens (Human), this protein is Nuclear factor erythroid 2-related factor 3 (NFE2L3).